Here is a 387-residue protein sequence, read N- to C-terminus: WD repeat-containing protein 89 (387 aa).

6 WD repeats span residues 21–65, 68–107, 112–156, 168–208, 214–254, and 319–358; these read KEPT…VLRE, GYPG…EKPV, GYPS…QDLS, THSD…EEDA, NSIS…TDEP, and GHAA…KTFT.

The polypeptide is WD repeat-containing protein 89 (WDR89) (Pongo abelii (Sumatran orangutan)).